The following is a 60-amino-acid chain: Large ribosomal subunit protein bL32 (60 aa).

Disordered regions lie at residues 1-22 (MAVQ…HNAL) and 34-60 (GETH…KSEA). Over residues 9-19 (SPSKRGMHRSH) the composition is skewed to basic residues.

This sequence belongs to the bacterial ribosomal protein bL32 family.

This is Large ribosomal subunit protein bL32 from Variovorax paradoxus (strain S110).